The following is a 209-amino-acid chain: Large ribosomal subunit protein uL3 (209 aa).

A disordered region spans residues 130–162 (RGPMTHGSKFKRAPGSMGASSDPSRTFKNKRMP).

This sequence belongs to the universal ribosomal protein uL3 family. As to quaternary structure, part of the 50S ribosomal subunit. Forms a cluster with proteins L14 and L19.

Functionally, one of the primary rRNA binding proteins, it binds directly near the 3'-end of the 23S rRNA, where it nucleates assembly of the 50S subunit. The chain is Large ribosomal subunit protein uL3 from Clostridium botulinum (strain Alaska E43 / Type E3).